We begin with the raw amino-acid sequence, 464 residues long: tRNA modification GTPase MnmE (464 aa).

Residues Arg-25, Glu-87, and Lys-130 each coordinate (6S)-5-formyl-5,6,7,8-tetrahydrofolate. Residues 226 to 386 (GLSVVLAGQP…LRAELLRIAG (161 aa)) form the TrmE-type G domain. Residue Asn-236 coordinates K(+). Residues 236–241 (NVGKSS), 255–261 (TPIAGTT), and 280–283 (DTAG) each bind GTP. Residue Ser-240 participates in Mg(2+) binding. K(+) contacts are provided by Thr-255, Ile-257, and Thr-260. Thr-261 is a binding site for Mg(2+). Lys-464 is a (6S)-5-formyl-5,6,7,8-tetrahydrofolate binding site.

Belongs to the TRAFAC class TrmE-Era-EngA-EngB-Septin-like GTPase superfamily. TrmE GTPase family. In terms of assembly, homodimer. Heterotetramer of two MnmE and two MnmG subunits. The cofactor is K(+).

The protein resides in the cytoplasm. Its function is as follows. Exhibits a very high intrinsic GTPase hydrolysis rate. Involved in the addition of a carboxymethylaminomethyl (cmnm) group at the wobble position (U34) of certain tRNAs, forming tRNA-cmnm(5)s(2)U34. This Burkholderia orbicola (strain MC0-3) protein is tRNA modification GTPase MnmE.